The sequence spans 468 residues: Peroxisome proliferator-activated receptor alpha (468 aa).

The segment at residues 99–173 (NIECRICGDK…VGMSHNAIRF (75 aa)) is a DNA-binding region (nuclear receptor). NR C4-type zinc fingers lie at residues 102 to 122 (CRIC…CEGC) and 139 to 161 (CDRS…FHKC). Residues 239-466 (FVIHDMETLC…HPLLQEIYRD (228 aa)) enclose the NR LBD domain. The tract at residues 304-433 (DQVTLLKYGV…PKLLQKMVDL (130 aa)) is required for heterodimerization with RXRA.

Belongs to the nuclear hormone receptor family. NR1 subfamily. In terms of assembly, heterodimer; with RXRA. This heterodimerization is required for DNA binding and transactivation activity. Interacts with NCOA3 coactivator. Interacts with CITED2; the interaction stimulates its transcriptional activity. Also interacts with PPARBP in vitro. Interacts with AKAP13, LPIN1, PRDM16 and coactivator NCOA6. Interacts with ASXL1 and ASXL2. Interacts with PER2. Interacts with SIRT1; the interaction seems to be modulated by NAD(+) levels. Interacts with CRY1 and CRY2. In hepatocytes, interacts with PAQR3 and HUWE1; the interactions promote PPARA poylubiquitination and HUWE1-mediated degradation. Phosphorylated. Post-translationally, ubiquitinated by E3 ubiquitin-protein ligase HUWE1; leading to proteasomal degradation. As to expression, expressed predominantly in liver and kidney.

The protein resides in the nucleus. Its function is as follows. Ligand-activated transcription factor. Key regulator of lipid metabolism. Activated by the endogenous ligand 1-palmitoyl-2-oleoyl-sn-glycerol-3-phosphocholine (16:0/18:1-GPC). Activated by oleylethanolamide, a naturally occurring lipid that regulates satiety. Receptor for peroxisome proliferators such as hypolipidemic drugs and fatty acids. Regulates the peroxisomal beta-oxidation pathway of fatty acids. Functions as a transcription activator for the ACOX1 and P450 genes. Transactivation activity requires heterodimerization with RXRA and is antagonized by NR2C2. May be required for the propagation of clock information to metabolic pathways regulated by PER2. The protein is Peroxisome proliferator-activated receptor alpha (Ppara) of Rattus norvegicus (Rat).